Consider the following 189-residue polypeptide: dCTP deaminase (189 aa).

Residues 112 to 117, 136 to 138, Gln-157, Tyr-171, and Gln-181 contribute to the dCTP site; these read KSTYAR and TLE. Glu-138 serves as the catalytic Proton donor/acceptor.

It belongs to the dCTP deaminase family. Homotrimer.

The enzyme catalyses dCTP + H2O + H(+) = dUTP + NH4(+). It participates in pyrimidine metabolism; dUMP biosynthesis; dUMP from dCTP (dUTP route): step 1/2. Catalyzes the deamination of dCTP to dUTP. This Xanthomonas oryzae pv. oryzae (strain MAFF 311018) protein is dCTP deaminase.